The primary structure comprises 211 residues: ATP phosphoribosyltransferase (211 aa).

It belongs to the ATP phosphoribosyltransferase family. Short subfamily. As to quaternary structure, heteromultimer composed of HisG and HisZ subunits.

Its subcellular location is the cytoplasm. The catalysed reaction is 1-(5-phospho-beta-D-ribosyl)-ATP + diphosphate = 5-phospho-alpha-D-ribose 1-diphosphate + ATP. It participates in amino-acid biosynthesis; L-histidine biosynthesis; L-histidine from 5-phospho-alpha-D-ribose 1-diphosphate: step 1/9. In terms of biological role, catalyzes the condensation of ATP and 5-phosphoribose 1-diphosphate to form N'-(5'-phosphoribosyl)-ATP (PR-ATP). Has a crucial role in the pathway because the rate of histidine biosynthesis seems to be controlled primarily by regulation of HisG enzymatic activity. This chain is ATP phosphoribosyltransferase, found in Clostridium botulinum (strain 657 / Type Ba4).